Reading from the N-terminus, the 276-residue chain is Rhamnulose-1-phosphate aldolase (276 aa).

Glutamate 117 is a catalytic residue. Histidine 141, histidine 143, and histidine 212 together coordinate Zn(2+).

Belongs to the aldolase class II family. RhaD subfamily. Homotetramer. Zn(2+) is required as a cofactor.

The protein resides in the cytoplasm. The catalysed reaction is L-rhamnulose 1-phosphate = (S)-lactaldehyde + dihydroxyacetone phosphate. Its pathway is carbohydrate degradation; L-rhamnose degradation; glycerone phosphate from L-rhamnose: step 3/3. Its function is as follows. Catalyzes the reversible cleavage of L-rhamnulose-1-phosphate to dihydroxyacetone phosphate (DHAP) and L-lactaldehyde. The protein is Rhamnulose-1-phosphate aldolase of Enterobacter sp. (strain 638).